Reading from the N-terminus, the 569-residue chain is MSNKNKSYDYVIIGGGSAGSVLGNRLSEDKDKEVLVLEAGRSDYFWDLFIQMPAALMFPSGNKFYDWIYSTDEEPHMGGRKVAHARGKVLGGSSSINGMIYQRGNPMDYEGWAEPEGMETWDFAHCLPYFKKLEKTYGAAPYDKFRGHDGPIKLKRGPATNPLFQSFFDAGVEAGYHKTPDVNGFRQEGFGPFDSQVHRGRRMSASRAYLHPAMKRKNLTVETRAFVTEIHYEGRRATGVTYKKNGKLHTIDANEVILSGGAFNTPQLLQLSGIGDSEFLKSKGIEPRVHLPGVGENFEDHLEVYIQHKCKEPVSLQPSLDIKRMPFIGLQWIFTRTGAAASNHFEGGGFVRSNNEVDYPNLMFHFLPIAVRYDGQKAAVAHGYQVHVGPMYSNSRGSLKIKSKDPFEKPSIRFNYLSTEEDKKEWVEAIRVARNILSQKAMDPFNGGEISPGPEVQTDEEILDWVRRDGETALHPSCSAKMGPASDPMAVVDPLTMKVHGMENLRVVDASAMPRTTNGNIHAPVLMLAEKAADIIRGRKPLEPQYIDYYKHGVHDENEGAIEVKPYAK.

9-38 (DYVIIGGGSAGSVLGNRLSEDKDKEVLVLE) provides a ligand contact to FAD. Residue His475 is the Proton acceptor of the active site.

The protein belongs to the GMC oxidoreductase family. It depends on FAD as a cofactor.

The catalysed reaction is choline + A = betaine aldehyde + AH2. It catalyses the reaction betaine aldehyde + NAD(+) + H2O = glycine betaine + NADH + 2 H(+). Its pathway is amine and polyamine biosynthesis; betaine biosynthesis via choline pathway; betaine aldehyde from choline (cytochrome c reductase route): step 1/1. Functionally, involved in the biosynthesis of the osmoprotectant glycine betaine. Catalyzes the oxidation of choline to betaine aldehyde and betaine aldehyde to glycine betaine at the same rate. This chain is Oxygen-dependent choline dehydrogenase, found in Staphylococcus aureus (strain COL).